The sequence spans 136 residues: MLAPKKQKFRKAHKGRVVSKSKAGTTLAFGSFGLKSIDGWRVTARQIEAGRKAATRCMKRQGRLWIRIFPDLPVSKKPAEVRMGKGKGNPEFFAVRVSPGRIMFEIEGVEEDVAVKALELASAKLPVRTRIVRHYE.

The protein belongs to the universal ribosomal protein uL16 family. As to quaternary structure, part of the 50S ribosomal subunit.

Its function is as follows. Binds 23S rRNA and is also seen to make contacts with the A and possibly P site tRNAs. The sequence is that of Large ribosomal subunit protein uL16 from Rickettsia bellii (strain OSU 85-389).